The sequence spans 666 residues: Protein scarlet (666 aa).

Over 1–417 (MSDSDSKRID…TIQWLRFIQK (417 aa)) the chain is Cytoplasmic. The interval 26-55 (PVGSTIEVPSLDSTPKLSKRNSSERSLPLR) is disordered. Positions 69–316 (LVWRDLCVYT…FANHGYYCPE (248 aa)) constitute an ABC transporter domain. 108–115 (GSSGSGKT) is a binding site for ATP. The chain crosses the membrane as a helical span at residues 418–438 (IAMAFIIGACFAGTTEPSQLG). Residues 439 to 444 (VQAVQG) lie on the Extracellular side of the membrane. The chain crosses the membrane as a helical span at residues 445–465 (ALFIMISENTYHPMYSVLNLF). At 466–490 (PQGFPLFMRETRSGLYSTGQYYAAN) the chain is on the cytoplasmic side. A helical transmembrane segment spans residues 491–511 (ILALLPGMIIEPLIFVIICYW). At 512 to 518 (LTGLRST) the chain is on the extracellular side. A helical transmembrane segment spans residues 519–539 (FYAFGVTAMCVVLVMNVATAC). At 540–551 (GCFFSTAFNSVP) the chain is on the cytoplasmic side. The chain crosses the membrane as a helical span at residues 552–572 (LAMAYLVPLDYIFMITSGIFI). The Extracellular portion of the chain corresponds to 573–639 (QVNSLPVAFW…YSFNESNVYR (67 aa)). Residues Asn-607 and Asn-633 are each glycosylated (N-linked (GlcNAc...) asparagine). A helical membrane pass occupies residues 640–660 (NLLAMVGLYFGFHLLGYYCLW). The Cytoplasmic segment spans residues 661–666 (RRARKL).

The protein belongs to the ABC transporter superfamily. ABCG family. Eye pigment precursor importer (TC 3.A.1.204) subfamily. In terms of assembly, may form a heterodimer with w/white. As to expression, expressed in the eye, specifically in primary pigment cells, secondary pigment cells and retinula cells (at protein level).

It is found in the cytoplasmic vesicle membrane. The enzyme catalyses L-kynurenine(out) + ATP + H2O = L-kynurenine(in) + ADP + phosphate + H(+). In terms of biological role, ATP-dependent transporter of the ATP-binding cassette (ABC) family which transports various molecules including bioamines, neurotransmitters and metabolic intermediates. In the eye and probably in association with w/white, required for the transport of the eye brown pigment precursors, kynurenine and probably tryptophan, into pigment cell granules. In Malpighian tubules and pupal eyes, involved in kynurenine transport. Probably in association with w/white, plays a role in zinc storage granule biogenesis in Malpighian tubule principal epithelial cells. The sequence is that of Protein scarlet from Drosophila melanogaster (Fruit fly).